We begin with the raw amino-acid sequence, 41 residues long: Cytochrome b559 subunit beta (41 aa).

The chain crosses the membrane as a helical span at residues 16 to 32 (WLAVHALAIPTVFFLGS). H20 contributes to the heme binding site.

Belongs to the PsbE/PsbF family. Heterodimer of an alpha subunit and a beta subunit. PSII is composed of 1 copy each of membrane proteins PsbA, PsbB, PsbC, PsbD, PsbE, PsbF, PsbH, PsbI, PsbJ, PsbK, PsbL, PsbM, PsbT, PsbY, PsbZ, Psb30/Ycf12, at least 3 peripheral proteins of the oxygen-evolving complex and a large number of cofactors. It forms dimeric complexes. The cofactor is heme b.

The protein resides in the plastid. It is found in the chloroplast thylakoid membrane. Functionally, this b-type cytochrome is tightly associated with the reaction center of photosystem II (PSII). PSII is a light-driven water:plastoquinone oxidoreductase that uses light energy to abstract electrons from H(2)O, generating O(2) and a proton gradient subsequently used for ATP formation. It consists of a core antenna complex that captures photons, and an electron transfer chain that converts photonic excitation into a charge separation. In Euglena gracilis, this protein is Cytochrome b559 subunit beta.